A 131-amino-acid chain; its full sequence is Peptide methionine sulfoxide reductase MsrB (131 aa).

Residues 8–130 enclose the MsrB domain; the sequence is LDEWRSMLDP…NSVCIDLRPR (123 aa). Zn(2+) contacts are provided by C47, C50, C96, and C99. The active-site Nucleophile is the C119.

It belongs to the MsrB Met sulfoxide reductase family. Requires Zn(2+) as cofactor.

It carries out the reaction L-methionyl-[protein] + [thioredoxin]-disulfide + H2O = L-methionyl-(R)-S-oxide-[protein] + [thioredoxin]-dithiol. In Pseudomonas putida (strain ATCC 47054 / DSM 6125 / CFBP 8728 / NCIMB 11950 / KT2440), this protein is Peptide methionine sulfoxide reductase MsrB.